A 171-amino-acid chain; its full sequence is Phosphopantetheine adenylyltransferase (171 aa).

Residue T10 coordinates substrate. ATP contacts are provided by residues 10-11 (TF) and H18. K42, T74, and R88 together coordinate substrate. Residues 89–91 (GLR), E99, and 124–130 (WACLSSK) each bind ATP.

Belongs to the bacterial CoaD family. In terms of assembly, homohexamer. Requires Mg(2+) as cofactor.

The protein localises to the cytoplasm. The enzyme catalyses (R)-4'-phosphopantetheine + ATP + H(+) = 3'-dephospho-CoA + diphosphate. It participates in cofactor biosynthesis; coenzyme A biosynthesis; CoA from (R)-pantothenate: step 4/5. Reversibly transfers an adenylyl group from ATP to 4'-phosphopantetheine, yielding dephospho-CoA (dPCoA) and pyrophosphate. The chain is Phosphopantetheine adenylyltransferase from Blochmanniella pennsylvanica (strain BPEN).